We begin with the raw amino-acid sequence, 361 residues long: MATLARLQARSSTVGNQYYFRNSVVDPFRKKENDAAVKIQSWFRGCQVRAYIRHLNRIVTIIQKWWRSFLGRKQYQLTVQVAYYTMMMNLYNAMAVRIQRRWRGYRVRKYLFNYYYLKEYLKVVSETNDAIRKALEEFAEMKEREEKKANLEREEKKRDYQARKMHYLLSTKQIPGIYNSPFRKEPDPWELQLQKAKPLTHRRPKVKQKDSTSLTDWLACTSARSFPRSEILPPINRKQCQGPFRDITEVLEQRYRPLEPTLRVAEPIDELKLAREELRREEWLQNVNDNMFLPFSSYHKNEKYIPSMHLSSKYGPISYKEQFRSENPKKWICDKDFQTVLPSFELFSKYGKLYSKAGQIV.

3 IQ domains span residues Glu32 to Ile61, Leu55 to Tyr84, and Tyr91 to Tyr120.

The protein resides in the cytoplasm. The protein is Spermatogenesis-associated protein 17 (SPATA17) of Homo sapiens (Human).